The sequence spans 353 residues: Alanine racemase (353 aa).

Catalysis depends on Lys-33, which acts as the Proton acceptor; specific for D-alanine. An N6-(pyridoxal phosphate)lysine modification is found at Lys-33. Arg-129 contacts substrate. Tyr-250 serves as the catalytic Proton acceptor; specific for L-alanine. Substrate is bound at residue Met-298.

It belongs to the alanine racemase family. Pyridoxal 5'-phosphate serves as cofactor.

The enzyme catalyses L-alanine = D-alanine. Its pathway is amino-acid biosynthesis; D-alanine biosynthesis; D-alanine from L-alanine: step 1/1. Functionally, catalyzes the interconversion of L-alanine and D-alanine. May also act on other amino acids. This Azoarcus sp. (strain BH72) protein is Alanine racemase (alr).